We begin with the raw amino-acid sequence, 213 residues long: MKAYQREFIEFALEKQVLKFGEFTLKSGRKSPYFFNAGLFNTGRDLARLGRFYAAALADSGIEFDVLFGPAYKGIPIATTTAVALADHHDIDTPYCFNRKEAKDHGEGGNLVGSALEGRIMLVDDVITAGTAIRESMEIIQANGADLAGVLVAIDRQEKGKGELSAIQEVERDFACAVISIVSLSDLITFLEEKGDAAEHLDAVKAYRAQYGI.

Residue lysine 26 participates in 5-phospho-alpha-D-ribose 1-diphosphate binding. Orotate is bound at residue 34–35; sequence FF. 5-phospho-alpha-D-ribose 1-diphosphate contacts are provided by residues 72–73, arginine 99, lysine 100, lysine 103, histidine 105, and 124–132; these read YK and DDVITAGTA. The orotate site is built by threonine 128 and arginine 156.

Belongs to the purine/pyrimidine phosphoribosyltransferase family. PyrE subfamily. In terms of assembly, homodimer. Mg(2+) serves as cofactor.

The enzyme catalyses orotidine 5'-phosphate + diphosphate = orotate + 5-phospho-alpha-D-ribose 1-diphosphate. It participates in pyrimidine metabolism; UMP biosynthesis via de novo pathway; UMP from orotate: step 1/2. Catalyzes the transfer of a ribosyl phosphate group from 5-phosphoribose 1-diphosphate to orotate, leading to the formation of orotidine monophosphate (OMP). The sequence is that of Orotate phosphoribosyltransferase from Vibrio vulnificus (strain CMCP6).